The primary structure comprises 202 residues: Na(+)-translocating NADH-quinone reductase subunit E (202 aa).

The next 6 helical transmembrane spans lie at 11-31 (SIFMENMALAFFLGMCTFLAV), 41-61 (LGVAVIVVLGISVPVNQIIYF), 81-101 (FLGFITFIGVIAALVQILEMV), 114-134 (GIYLPLITVNCAILGGVLFMV), 144-164 (LVYGVGSGVGWMLAIVLLAGI), and 180-200 (LGITFTTAGLMAIAFMSFSGI).

This sequence belongs to the NqrDE/RnfAE family. Composed of six subunits; NqrA, NqrB, NqrC, NqrD, NqrE and NqrF.

Its subcellular location is the cell inner membrane. It catalyses the reaction a ubiquinone + n Na(+)(in) + NADH + H(+) = a ubiquinol + n Na(+)(out) + NAD(+). Its function is as follows. NQR complex catalyzes the reduction of ubiquinone-1 to ubiquinol by two successive reactions, coupled with the transport of Na(+) ions from the cytoplasm to the periplasm. NqrA to NqrE are probably involved in the second step, the conversion of ubisemiquinone to ubiquinol. In Psychromonas ingrahamii (strain DSM 17664 / CCUG 51855 / 37), this protein is Na(+)-translocating NADH-quinone reductase subunit E.